Consider the following 260-residue polypeptide: Outer membrane protein assembly factor BamD (260 aa).

Residues 1–19 (MRKLKSFTFIALTAFAITA) form the signal peptide. Cysteine 20 carries N-palmitoyl cysteine lipidation. The S-diacylglycerol cysteine moiety is linked to residue cysteine 20.

Belongs to the BamD family. In terms of assembly, part of the Bam complex.

Its subcellular location is the cell outer membrane. Part of the outer membrane protein assembly complex, which is involved in assembly and insertion of beta-barrel proteins into the outer membrane. In Pasteurella multocida (strain Pm70), this protein is Outer membrane protein assembly factor BamD.